A 79-amino-acid polypeptide reads, in one-letter code: Acyl carrier protein 2 (79 aa).

The Carrier domain maps to 2–77; sequence DDIETRVRKL…QAIDYLEEAV (76 aa). Ser-37 carries the post-translational modification O-(pantetheine 4'-phosphoryl)serine.

It belongs to the acyl carrier protein (ACP) family. Post-translationally, 4'-phosphopantetheine is transferred from CoA to a specific serine of apo-ACP by AcpS. This modification is essential for activity because fatty acids are bound in thioester linkage to the sulfhydryl of the prosthetic group.

Its subcellular location is the cytoplasm. The protein operates within lipid metabolism; fatty acid biosynthesis. Functionally, carrier of the growing fatty acid chain in fatty acid biosynthesis. The chain is Acyl carrier protein 2 from Pseudomonas aeruginosa (strain ATCC 15692 / DSM 22644 / CIP 104116 / JCM 14847 / LMG 12228 / 1C / PRS 101 / PAO1).